The sequence spans 245 residues: Orotidine 5'-phosphate decarboxylase (245 aa).

Substrate contacts are provided by residues Asp-22, Lys-44, 71–80 (DLKFHDIPNT), Thr-131, Arg-192, Gln-201, Gly-221, and Arg-222. The Proton donor role is filled by Lys-73.

It belongs to the OMP decarboxylase family. Type 1 subfamily. Homodimer.

The catalysed reaction is orotidine 5'-phosphate + H(+) = UMP + CO2. It participates in pyrimidine metabolism; UMP biosynthesis via de novo pathway; UMP from orotate: step 2/2. In terms of biological role, catalyzes the decarboxylation of orotidine 5'-monophosphate (OMP) to uridine 5'-monophosphate (UMP). This is Orotidine 5'-phosphate decarboxylase from Escherichia coli (strain 55989 / EAEC).